The primary structure comprises 1463 residues: Probable oxidoreductase PXDNL (1463 aa).

A signal peptide spans 1-23 (MEPRLFCWTTLFLLAGWCLPGLP). The 27-residue stretch at 24–50 (CPSRCLCFKSTVRCMHLMLDHIPQVPQ) folds into the LRRNT domain. 5 LRR repeats span residues 51–72 (QTTV…AFKK), 75–96 (NLNT…AFEG), 99–120 (NLLY…TFKG), 123–144 (SLEH…TFGD), and 147–168 (RLER…SFSN). One can recognise an LRRCT domain in the interval 180 to 233 (NALVCDCDLMWLGELLQGFAQHGHTQAAATCEYPRRLHGRAVASVTVEEFNCQS). Ig-like C2-type domains lie at 234–322 (PRIT…AMLR), 330–414 (PSFV…ANII), 419–504 (PQFT…VQLT), and 507–596 (PKAL…MFLT). Cystine bridges form between C255/C305, C351/C398, C440/C488, C532/C580, and C718/C734. The N-linked (GlcNAc...) asparagine glycan is linked to N387. H812 acts as the Proton acceptor in catalysis. D813 contacts Ca(2+). 2 disulfides stabilise this stretch: C832–C842 and C836–C859. Positions 891, 893, 895, and 897 each coordinate Ca(2+). A disulfide bridge connects residues C944 and C953. H1057 provides a ligand contact to heme b. 2 cysteine pairs are disulfide-bonded: C1160/C1217 and C1258/C1284. In terms of domain architecture, VWFC spans 1393-1451 (AGCTDVRGVPRKAEERWMKEDCTHCICESGQVTCVVEICPPAPCPSPELVKGTCCPVCR).

It belongs to the peroxidase family. XPO subfamily. Interacts with PXDN; this interaction inhibits the peroxidase activity of PXDN. Heme b is required as a cofactor. In terms of processing, phosphorylation by SRC on tyrosine residues is required for targeting to polysomes. As to expression, the 57 kDa isoform PMR1 is the only form detected at protein levels in human cell lines. Expressed in heart.

The protein resides in the secreted. It is found in the endoplasmic reticulum. The protein localises to the cell membrane. It localises to the cytoplasm. Its function is as follows. Probable oxidoreductase. Lacks peroxidase activity. Inhibits the peroxidase activity of PXDN through its interaction. In terms of biological role, endonuclease selectively degrading some target mRNAs while they are engaged by translating ribosomes, among which albumin and beta-globin mRNAs. The protein is Probable oxidoreductase PXDNL of Homo sapiens (Human).